A 144-amino-acid polypeptide reads, in one-letter code: Large ribosomal subunit protein uL15 (144 aa).

A disordered region spans residues 1-57; sequence MRLNTLSPAPGSKPSAKRVGRGIGSGLGKTCGRGHKGQKSRSGGSVRPGFEGGQMPL. The span at 21–31 shows a compositional bias: gly residues; it reads RGIGSGLGKTC.

The protein belongs to the universal ribosomal protein uL15 family. As to quaternary structure, part of the 50S ribosomal subunit.

Its function is as follows. Binds to the 23S rRNA. The sequence is that of Large ribosomal subunit protein uL15 from Photobacterium profundum (strain SS9).